Consider the following 196-residue polypeptide: Peroxiredoxin TSA2 (196 aa).

The region spanning 3-161 (AEVQKQAPPF…ALRLVEGFQW (159 aa)) is the Thioredoxin domain. K14 participates in a covalent cross-link: Glycyl lysine isopeptide (Lys-Gly) (interchain with G-Cter in ubiquitin). Residue C48 is the Cysteine sulfenic acid (-SOH) intermediate of the active site. Glycyl lysine isopeptide (Lys-Gly) (interchain with G-Cter in ubiquitin) cross-links involve residues K89 and K132. T174 carries the post-translational modification Phosphothreonine.

The protein belongs to the peroxiredoxin family. AhpC/Prx1 subfamily. Homodimer; disulfide-linked, upon oxidation.

The protein localises to the cytoplasm. The catalysed reaction is a hydroperoxide + [thioredoxin]-dithiol = an alcohol + [thioredoxin]-disulfide + H2O. Functionally, thiol-specific peroxidase that catalyzes the reduction of hydrogen peroxide and organic hydroperoxides to water and alcohols, respectively. Plays a role in cell protection against oxidative stress by detoxifying peroxides and as sensor of hydrogen peroxide-mediated signaling events. Can act alternatively as peroxidase and molecular chaperone. Oxidative stress and heat shock exposure cause a reversible shift of the protein structure from low MW species to high MW complexes, triggering a peroxidase-to-chaperone functional switch. The chaperone function of the protein enhances resistance to heat shock. This Saccharomyces cerevisiae (strain ATCC 204508 / S288c) (Baker's yeast) protein is Peroxiredoxin TSA2.